A 395-amino-acid chain; its full sequence is 8-amino-7-oxononanoate synthase (395 aa).

Residue R24 participates in substrate binding. A pyridoxal 5'-phosphate-binding site is contributed by 111 to 112 (GF). H136 contacts substrate. Pyridoxal 5'-phosphate is bound by residues S184, 209-212 (DDAH), and 240-243 (TLSK). An N6-(pyridoxal phosphate)lysine modification is found at K243. Residue T357 coordinates substrate.

The protein belongs to the class-II pyridoxal-phosphate-dependent aminotransferase family. BioF subfamily. As to quaternary structure, homodimer. Requires pyridoxal 5'-phosphate as cofactor.

It carries out the reaction 6-carboxyhexanoyl-[ACP] + L-alanine + H(+) = (8S)-8-amino-7-oxononanoate + holo-[ACP] + CO2. Its pathway is cofactor biosynthesis; biotin biosynthesis. In terms of biological role, catalyzes the decarboxylative condensation of pimeloyl-[acyl-carrier protein] and L-alanine to produce 8-amino-7-oxononanoate (AON), [acyl-carrier protein], and carbon dioxide. This is 8-amino-7-oxononanoate synthase from Thermoanaerobacter pseudethanolicus (strain ATCC 33223 / 39E) (Clostridium thermohydrosulfuricum).